The sequence spans 87 residues: Small ribosomal subunit protein uS15 (87 aa).

Positions 1–19 (MDKAKKQELMAKHARHEGD) are enriched in basic and acidic residues. Residues 1-23 (MDKAKKQELMAKHARHEGDTGSP) are disordered.

The protein belongs to the universal ribosomal protein uS15 family. In terms of assembly, part of the 30S ribosomal subunit. Forms a bridge to the 50S subunit in the 70S ribosome, contacting the 23S rRNA.

Functionally, one of the primary rRNA binding proteins, it binds directly to 16S rRNA where it helps nucleate assembly of the platform of the 30S subunit by binding and bridging several RNA helices of the 16S rRNA. In terms of biological role, forms an intersubunit bridge (bridge B4) with the 23S rRNA of the 50S subunit in the ribosome. This is Small ribosomal subunit protein uS15 from Clostridium botulinum (strain Loch Maree / Type A3).